The primary structure comprises 199 residues: Recombination protein RecR (199 aa).

A C4-type zinc finger spans residues 56 to 71 (CSICFNWSAEDPCEIC). Positions 79-174 (SLWCVVADVK…TLRMTRLAFG (96 aa)) constitute a Toprim domain.

This sequence belongs to the RecR family.

Functionally, may play a role in DNA repair. It seems to be involved in an RecBC-independent recombinational process of DNA repair. It may act with RecF and RecO. The sequence is that of Recombination protein RecR from Synechococcus sp. (strain JA-2-3B'a(2-13)) (Cyanobacteria bacterium Yellowstone B-Prime).